We begin with the raw amino-acid sequence, 335 residues long: GTPase Obg (335 aa).

Residues 1-159 enclose the Obg domain; that stretch reads MKFVDSAKIS…YELEMELKLM (159 aa). One can recognise an OBG-type G domain in the interval 160–323; the sequence is ADVGLVGFPN…LKDELWRQVS (164 aa). Residues 166–173, 191–195, 213–216, 280–283, and 304–306 each bind GTP; these read GFPNAGKS, FTTLV, DIPG, TKMD, and SSV. Mg(2+) contacts are provided by S173 and T193.

It belongs to the TRAFAC class OBG-HflX-like GTPase superfamily. OBG GTPase family. As to quaternary structure, monomer. It depends on Mg(2+) as a cofactor.

It localises to the cytoplasm. In terms of biological role, an essential GTPase which binds GTP, GDP and possibly (p)ppGpp with moderate affinity, with high nucleotide exchange rates and a fairly low GTP hydrolysis rate. Plays a role in control of the cell cycle, stress response, ribosome biogenesis and in those bacteria that undergo differentiation, in morphogenesis control. This is GTPase Obg from Chlorobaculum tepidum (strain ATCC 49652 / DSM 12025 / NBRC 103806 / TLS) (Chlorobium tepidum).